The chain runs to 83 residues: Exodeoxyribonuclease 7 small subunit (83 aa).

The protein belongs to the XseB family. As to quaternary structure, heterooligomer composed of large and small subunits.

Its subcellular location is the cytoplasm. The catalysed reaction is Exonucleolytic cleavage in either 5'- to 3'- or 3'- to 5'-direction to yield nucleoside 5'-phosphates.. Bidirectionally degrades single-stranded DNA into large acid-insoluble oligonucleotides, which are then degraded further into small acid-soluble oligonucleotides. This Mesorhizobium japonicum (strain LMG 29417 / CECT 9101 / MAFF 303099) (Mesorhizobium loti (strain MAFF 303099)) protein is Exodeoxyribonuclease 7 small subunit.